The sequence spans 96 residues: Cytochrome c-553 (96 aa).

A signal peptide spans 1 to 19 (MKKVIVALGVLAFANVLMA). The heme c site is built by Cys29, Cys32, His33, and Met73.

This sequence belongs to the cytochrome c family. Post-translationally, binds 1 heme c group covalently per subunit.

Its subcellular location is the periplasm. Natural electron acceptor for a formate dehydrogenase. The sequence is that of Cytochrome c-553 from Helicobacter pylori (strain J99 / ATCC 700824) (Campylobacter pylori J99).